Reading from the N-terminus, the 438-residue chain is UDP-N-acetylmuramoylalanine--D-glutamate ligase (438 aa).

112 to 118 (GSNGKST) is an ATP binding site.

Belongs to the MurCDEF family.

Its subcellular location is the cytoplasm. The enzyme catalyses UDP-N-acetyl-alpha-D-muramoyl-L-alanine + D-glutamate + ATP = UDP-N-acetyl-alpha-D-muramoyl-L-alanyl-D-glutamate + ADP + phosphate + H(+). It participates in cell wall biogenesis; peptidoglycan biosynthesis. Functionally, cell wall formation. Catalyzes the addition of glutamate to the nucleotide precursor UDP-N-acetylmuramoyl-L-alanine (UMA). This is UDP-N-acetylmuramoylalanine--D-glutamate ligase from Shigella boydii serotype 4 (strain Sb227).